An 867-amino-acid chain; its full sequence is Schizokinen transporter SchT (867 aa).

The disordered stretch occupies residues 40 to 62 (HPGKTQEAPSPTQLNTQSPAPNA). Residues 46-62 (EAPSPTQLNTQSPAPNA) are compositionally biased toward polar residues. Positions 185 to 192 (IELVVTAT) match the TonB box motif. A TBDR plug domain is found at 197–307 (PIQNVPRSIT…TGGVINIITR (111 aa)). In terms of domain architecture, TBDR beta-barrel spans 313–867 (KLTSRTEVGV…TLSIKYSFDW (555 aa)). The TonB C-terminal box signature appears at 850-867 (AYAAARGRTLSIKYSFDW).

It belongs to the TonB-dependent receptor family.

It is found in the cell outer membrane. In terms of biological role, involved in the TonB-dependent uptake of iron in complex with schizokinen, a dihydroxamate-type siderophore. This Nostoc sp. (strain PCC 7120 / SAG 25.82 / UTEX 2576) protein is Schizokinen transporter SchT.